The sequence spans 275 residues: MTPHPIQDAVLRVDRLSVVYPGGVTALRDTSIAFRRGEFTVLLGLSGAGKSTLLRSLNRLVTPTGGSVTSELGELGSGSALRQHRRRTAMIFQHHQLIERQSALANVLTGRLAFHNTLRSLFPLPRADQEIALSCLARVGLADKALSRVDKLSGGQQQRVGIARALAQQPAIILADEPVASLDPATSVRVLGLLRDICKEDGITAIVSLHQLEYARRFADRVVGLADSQIVFDAAPSELTDAQLERIYAGRSTTQPANAPAEPPVMLEPSLEMSR.

Residues 11 to 252 (LRVDRLSVVY…QLERIYAGRS (242 aa)) enclose the ABC transporter domain. Residue 44 to 51 (GLSGAGKS) participates in ATP binding. The segment at 251 to 275 (RSTTQPANAPAEPPVMLEPSLEMSR) is disordered.

This sequence belongs to the ABC transporter superfamily. Phosphonates importer (TC 3.A.1.9.1) family. As to quaternary structure, the complex is composed of two ATP-binding proteins (PtxA), two transmembrane proteins (PtxC) and a solute-binding protein (PtxB).

The protein resides in the cell inner membrane. The enzyme catalyses phosphite(out) + ATP + H2O = phosphite(in) + ADP + phosphate + H(+). Its function is as follows. Part of the ABC transporter complex PtxABC involved in phosphite import. Responsible for energy coupling to the transport system. The protein is Phosphite import ATP-binding protein PxtA (ptxA) of Stutzerimonas stutzeri (Pseudomonas stutzeri).